The primary structure comprises 157 residues: Protein Smg (157 aa).

This sequence belongs to the Smg family.

This Escherichia coli O6:H1 (strain CFT073 / ATCC 700928 / UPEC) protein is Protein Smg.